We begin with the raw amino-acid sequence, 312 residues long: NAD(P)(+)--arginine ADP-ribosyltransferase 1 (312 aa).

An N-terminal signal peptide occupies residues 1-20; sequence MELLALRWVLLAGTLLSTSA. Positions 21-31 are excised as a propeptide; the sequence is ASSALQEGDLG. 2 disulfide bridges follow: C51/C260 and C159/C208. Residues 71-256 form the TR mART core domain; it reads IAYAVTWRQA…IQLHSKGKMS (186 aa). NAD(+) is bound by residues Y108, R164, and Q183. R164 is a catalytic residue. S186 is a catalytic residue. Position 217 (S217) interacts with NAD(+). E224 is a catalytic residue. A propeptide spanning residues 267-312 is cleaved from the precursor; the sequence is GGQWGRGHQEVGLGLSPGLSLPVLPCRRRVWEGLGHREGDPIPAAV.

This sequence belongs to the Arg-specific ADP-ribosyltransferase family.

Its subcellular location is the secreted. It is found in the extracellular space. The enzyme catalyses L-arginyl-[protein] + NAD(+) = N(omega)-(ADP-D-ribosyl)-L-arginyl-[protein] + nicotinamide + H(+). This chain is NAD(P)(+)--arginine ADP-ribosyltransferase 1, found in Gallus gallus (Chicken).